The sequence spans 319 residues: Cytochrome c biogenesis protein CcsA (319 aa).

8 consecutive transmembrane segments (helical) span residues 14–34, 36–56, 69–89, 97–117, 142–162, 227–247, 254–274, and 288–308; these read AFGG…FPGI, GLNR…TLTL, SNLY…HLFI, LIGA…SLAL, IMML…LFLI, TIGL…VWAN, WSWD…AAYL, and AILA…VNFL.

It belongs to the CcmF/CycK/Ccl1/NrfE/CcsA family. In terms of assembly, may interact with Ccs1.

The protein resides in the plastid. Its subcellular location is the chloroplast thylakoid membrane. Its function is as follows. Required during biogenesis of c-type cytochromes (cytochrome c6 and cytochrome f) at the step of heme attachment. This chain is Cytochrome c biogenesis protein CcsA, found in Pyropia yezoensis (Susabi-nori).